Consider the following 77-residue polypeptide: U9-lycotoxin-Ls1a (77 aa).

A signal peptide spans 1–20 (MKLLLFTALVLVVIVSLIEA). Residues 21–26 (EAENER) constitute a propeptide that is removed on maturation.

It belongs to the neurotoxin 19 (CSTX) family. 08 (U8-Lctx) subfamily. Contains 4 disulfide bonds. In terms of tissue distribution, expressed by the venom gland.

The protein resides in the secreted. This is U9-lycotoxin-Ls1a from Lycosa singoriensis (Wolf spider).